The sequence spans 581 residues: MESFDIVVVGAGWYGLMAARTYLELAPETNLLIVDDSSTVGGVWSKERIYPSLFAQISHPLFEYSFYPMPKDDISPDGFVSGKTIHNYLTSFTRDHNLLPRLRLNTRVERVRRGPSDAGGWVLDIKEGNPLLCHKLIYATGANSSPIIPTWPRQTFEQPVIHSLDLGKHQDYIAKSVETATVVGRSKSSYDAVYHLLCEGKRVNWVMRDGLSGPFSLYAPTFMGLWNIADHISTRFASSFSPCIMNTSGFCYNFLQRNAVGRTLTNVYWRAANYLSVSHAEYWRTPNAEKLRPRPYSDGVFWGSGGIGIATAPDFWKVFHRGNITIHSTEIDSLSHGDVVNLKNGYSLATDIVIHCTGFDKGYTTFDPELREELGLQYNSKSISRWSLLDAKAEQTVDELLPYLRTAPLQDMDPDASSRPEQGPNRHFRRLVVPELAARGDRSILFPGHIHSAFTPLAAELQALWGVSWMLGWRELPPQEEMELEAATFNAWTRKRYLEQGKKHSYFIYDYIPYIDTLMRDLGLNPYRKSSVFEEWFVRYKPSDYGTILDEYRDIRRLSLECLQGTGGFAERTNGHGVNMK.

43-46 (VWSK) provides a ligand contact to FAD. 54–56 (FAQ) provides a ligand contact to NADP(+). Val108 provides a ligand contact to FAD. Residues 183–202 (VGRSKSSYDAVYHLLCEGKR), 219–220 (AP), and 351–352 (DI) each bind NADP(+). FAD is bound at residue Met470.

This sequence belongs to the FAD-binding monooxygenase family. The cofactor is FAD.

The protein operates within polyketide biosynthesis. Its function is as follows. FAD-dependent monooxygenase; part of the gene cluster that mediates the biosynthesis of depudecin, a highly oxidized eleven-carbon linear polyketide that acts as a histone deacetylase (HDAC) inhibitor and makes a small contribution to pathogenesis. The reducing polyketide synthase DEP5 is the central enzyme in depudecin biosynthesis by yielding the backbone polyketide chain. The monooxygenases DEP2 and DEP4, as well as the uncharacterized protein DEP1, then act as tailoring enzymes to modify the intermediate polyketide chain into depudecin. The sequence is that of FAD-dependent monooxygenase DEP4 from Alternaria brassicicola (Dark leaf spot agent).